The primary structure comprises 353 residues: DNA-directed RNA polymerase subunit alpha (353 aa).

The segment at 1-226 (MLISQRPTLT…ELFGLARELN (226 aa)) is alpha N-terminal domain (alpha-NTD). An alpha C-terminal domain (alpha-CTD) region spans residues 241 to 353 (ADHIASFGLP…TEDYAETEQL (113 aa)). The interval 326-353 (ATGTWSDTDAGSFGDAEGTEDYAETEQL) is disordered. The segment covering 342–353 (EGTEDYAETEQL) has biased composition (acidic residues).

The protein belongs to the RNA polymerase alpha chain family. In terms of assembly, homodimer. The RNAP catalytic core consists of 2 alpha, 1 beta, 1 beta' and 1 omega subunit. When a sigma factor is associated with the core the holoenzyme is formed, which can initiate transcription.

It catalyses the reaction RNA(n) + a ribonucleoside 5'-triphosphate = RNA(n+1) + diphosphate. DNA-dependent RNA polymerase catalyzes the transcription of DNA into RNA using the four ribonucleoside triphosphates as substrates. The sequence is that of DNA-directed RNA polymerase subunit alpha from Rhodococcus jostii (strain RHA1).